Consider the following 943-residue polypeptide: Nuclear factor of activated T-cells, cytoplasmic 1 (943 aa).

The segment at 22–48 (GRGETLGPAPRAGGTMKSAEEEHYGYA) is disordered. Residues 118-123 (PRIEIT) form a calcineurin-binding region. The interval 126 to 218 (LGLYHNNNQF…CVSPKTTDPE (93 aa)) is transactivation domain A (TAD-A). The tract at residues 200–298 (PQTSPWQSPC…GSPRVSVTDD (99 aa)) is disordered. Residues 201–214 (QTSPWQSPCVSPKT) show a composition bias toward polar residues. 2 repeat units span residues 203-219 (SPWQSPCVSPKTTDPEE) and 233-249 (SPRHSPSTSPRASVTEE). The segment at 203–298 (SPWQSPCVSP…GSPRVSVTDD (96 aa)) is 3 X SP repeats. 2 positions are modified to phosphoserine: Ser233 and Ser237. Over residues 236 to 248 (HSPSTSPRASVTE) the composition is skewed to polar residues. Ser245 is subject to Phosphoserine; by PKA. Residues 265 to 267 (KRK) carry the Nuclear localization signal motif. The residue at position 269 (Ser269) is a Phosphoserine; by PKA. The segment covering 276 to 288 (PYSPHHSPTPSPH) has biased composition (pro residues). Repeat 3 spans residues 282 to 298 (SPTPSPHGSPRVSVTDD). Phosphoserine; by PKA is present on Ser294. The short motif at 310–321 (SAIVAAINALTT) is the Nuclear export signal element. Residues 410-592 (PTLPALDWQL…NPIECSQRSA (183 aa)) form the RHD domain. Residues 439-446 (RAHYETEG) mediate DNA binding. Residues 682–684 (KRK) carry the Nuclear localization signal motif. The segment at 703–943 (TEPTDDYEPA…NDLSSTSTHS (241 aa)) is transactivation domain B (TAD-B). The disordered stretch occupies residues 787-912 (HLGLPQPAGE…SPNLAPIPVT (126 aa)). Pro residues predominate over residues 846–855 (SPSPPLPPAT). Residues 924–933 (YLDDVNEIIR) carry the Nuclear export signal motif.

Member of the multicomponent NFATC transcription complex that consists of at least two components, a pre-existing cytoplasmic component NFATC2 and an inducible nuclear component NFATC1. Other members such as NFATC4, NFATC3 or members of the activating protein-1 family, MAF, GATA4 and Cbp/p300 can also bind the complex. NFATC proteins bind to DNA as monomers. Interacts with HOMER2 and HOMER3; this interaction may compete with calcineurin/PPP3CA-binding and hence prevent NFATC1 dephosphorylation and activation. Interacts with TLE6/GRG6. Phosphorylated by NFATC-kinase and GSK3B; phosphorylation induces NFATC1 nuclear exit and dephosphorylation by calcineurin promotes nuclear import. Phosphorylation by PKA and DYRK2 negatively modulates nuclear accumulation, and promotes subsequent phosphorylation by GSK3B or casein kinase 1. As to expression, expressed in thymus, peripheral leukocytes as T-cells and spleen. Isoforms A are preferentially expressed in effector T-cells (thymus and peripheral leukocytes) whereas isoforms B and isoforms C are preferentially expressed in naive T-cells (spleen). Isoforms B are expressed in naive T-cells after first antigen exposure and isoforms A are expressed in effector T-cells after second antigen exposure. Isoforms IA are widely expressed but not detected in liver nor pancreas, neural expression is strongest in corpus callosum. Isoforms IB are expressed mostly in muscle, cerebellum, placenta and thymus, neural expression in fetal and adult brain, strongest in corpus callosum.

The protein resides in the cytoplasm. Its subcellular location is the nucleus. Plays a role in the inducible expression of cytokine genes in T-cells, especially in the induction of the IL-2 or IL-4 gene transcription. Also controls gene expression in embryonic cardiac cells. Could regulate not only the activation and proliferation but also the differentiation and programmed death of T-lymphocytes as well as lymphoid and non-lymphoid cells. Required for osteoclastogenesis and regulates many genes important for osteoclast differentiation and function. This chain is Nuclear factor of activated T-cells, cytoplasmic 1 (NFATC1), found in Homo sapiens (Human).